We begin with the raw amino-acid sequence, 287 residues long: Phosphatidylserine decarboxylase proenzyme (287 aa).

Catalysis depends on charge relay system; for autoendoproteolytic cleavage activity residues Asp-89, His-146, and Ser-252. Residue Ser-252 is the Schiff-base intermediate with substrate; via pyruvic acid; for decarboxylase activity of the active site. Residue Ser-252 is modified to Pyruvic acid (Ser); by autocatalysis.

Belongs to the phosphatidylserine decarboxylase family. PSD-B subfamily. Prokaryotic type I sub-subfamily. As to quaternary structure, heterodimer of a large membrane-associated beta subunit and a small pyruvoyl-containing alpha subunit. It depends on pyruvate as a cofactor. Is synthesized initially as an inactive proenzyme. Formation of the active enzyme involves a self-maturation process in which the active site pyruvoyl group is generated from an internal serine residue via an autocatalytic post-translational modification. Two non-identical subunits are generated from the proenzyme in this reaction, and the pyruvate is formed at the N-terminus of the alpha chain, which is derived from the carboxyl end of the proenzyme. The autoendoproteolytic cleavage occurs by a canonical serine protease mechanism, in which the side chain hydroxyl group of the serine supplies its oxygen atom to form the C-terminus of the beta chain, while the remainder of the serine residue undergoes an oxidative deamination to produce ammonia and the pyruvoyl prosthetic group on the alpha chain. During this reaction, the Ser that is part of the protease active site of the proenzyme becomes the pyruvoyl prosthetic group, which constitutes an essential element of the active site of the mature decarboxylase.

It is found in the cell membrane. The enzyme catalyses a 1,2-diacyl-sn-glycero-3-phospho-L-serine + H(+) = a 1,2-diacyl-sn-glycero-3-phosphoethanolamine + CO2. It functions in the pathway phospholipid metabolism; phosphatidylethanolamine biosynthesis; phosphatidylethanolamine from CDP-diacylglycerol: step 2/2. Catalyzes the formation of phosphatidylethanolamine (PtdEtn) from phosphatidylserine (PtdSer). The chain is Phosphatidylserine decarboxylase proenzyme from Shewanella pealeana (strain ATCC 700345 / ANG-SQ1).